The following is a 268-amino-acid chain: Microtubule-associated protein RP/EB family member 1 (268 aa).

Position 2 is an N-acetylalanine (A2). One can recognise a Calponin-homology (CH) domain in the interval 14–116; sequence NLSRHDMLAW…FVQWFKKFFD (103 aa). K66 bears the N6-crotonyllysine mark. Y124 is subject to Phosphotyrosine. The segment at 124-268 is interaction with MTUS2/TIP150; that stretch reads YDPVAARQGQ…GGPQEEQEEY (145 aa). A compositionally biased stretch (low complexity) spans 147-160; that stretch reads NKPKKPLSSSSAAP. The interval 147 to 184 is disordered; it reads NKPKKPLSSSSAAPQRPITTHRTTATPKAGPGVVRKNP. Phosphoserine is present on S155. Positions 163–172 are enriched in polar residues; sequence PITTHRTTAT. The region spanning 185–255 is the EB1 C-terminal domain; sequence GVGNGDDEAA…LYATDEGFVI (71 aa). The interval 185–268 is interaction with CDK5RAP2; that stretch reads GVGNGDDEAA…GGPQEEQEEY (84 aa). The segment at 206–211 is interaction with APC; sequence TVEDLE. The segment at 208–268 is DCTN1-binding; it reads EDLEKERDFY…GGPQEEQEEY (61 aa). K220 is subject to N6-acetyllysine. Residues 220–242 are APC-binding; that stretch reads KLRNIELICQENEGENNPVLQRI. An interaction with SKA1 region spans residues 232-255; that stretch reads EGENNPVLQRIVDILYATDEGFVI.

Belongs to the MAPRE family. As to quaternary structure, homodimer. Heterodimer with MAPRE3. Interacts with DCTN1, DCTN2, TERF1 and dynein intermediate chain. Interaction with DIAPH1 and DIAPH2. Interacts (via C-terminal residues 206-211) with APC (via C-terminal residues 2674-2845); the interaction inhibits association with and bundling of F-actin. Interacts with CLASP2, DST, KIF2C and STIM1; probably required for their targeting to the growing microtubule plus ends. Interacts with MTUS2; interaction is direct and probably targets MTUS2 to microtubules. Interacts (via C-terminus) with SKA1 (via SXIP motif); the interaction is direct and stabilizes the kinetochore-microtubule attachment of the SKA1 complex. Interacts with APC2. Interacts with CLASP1. Interacts with CDK5RAP2. Interacts with MACF1. Interacts with RABL2/RABL2A; binds preferentially to GTP-bound RABL2. Interacts with KCNAB2. Interacts (via C-terminus) with CLIP1. Interacts with SLAIN2 and SLAIN1. Interacts with KIF18B; this interaction is required for efficient accumulation of KIF18B at microtubule plus ends. Interacts with MISP. Interacts with KNSTRN. Interacts with NCKAP5L. Interacts with CAMSAP2. Interacts with PDE4DIP isoform 13/MMG8/SMYLE; this interaction is required for its recruitment to the Golgi apparatus. Forms a pericentrosomal complex with AKAP9, CDK5RAP2 and PDE4DIP isoform 13/MMG8/SMYLE; within this complex, MAPRE1 binding to CDK5RAP2 may be mediated by PDE4DIP. Interacts with AKNA. Interacts with GAS2L1, GAS2L2, and GAS2L3. Post-translationally, acetylation at Lys-220 by KAT2B/PCAF promotes dynamic kinetochore-microtubule interactions in early mitosis. In terms of processing, crotonylated by KAT5 during mitosis, promoting astral microtubule plasticity and dynamic connection between astral microtubules and the cortex during mitotic chromosome segregation, thereby ensuring accurate spindle positioning in mitosis. Decrotonylated by HDAC3.

The protein resides in the cytoplasm. It is found in the cytoskeleton. The protein localises to the microtubule organizing center. Its subcellular location is the centrosome. It localises to the golgi apparatus. The protein resides in the spindle. It is found in the spindle pole. Functionally, plus-end tracking protein (+TIP) that binds to the plus-end of microtubules and regulates the dynamics of the microtubule cytoskeleton. Recruits other +TIP proteins to microtubules by binding to a conserved Ser-X-Leu-Pro (SXLP) motif in their polypeptide chains. Promotes cytoplasmic microtubule nucleation and elongation. Involved in mitotic spindle positioning by stabilizing microtubules and promoting dynamic connection between astral microtubules and the cortex during mitotic chromosome segregation. Assists chromosome alignment in metaphase by recruiting the SKA complex to the spindle and stabilizing its interactions with microtubule bundles (K-fibers). Also acts as a regulator of minus-end microtubule organization: interacts with the complex formed by AKAP9 and PDE4DIP, leading to recruit CAMSAP2 to the Golgi apparatus, thereby tethering non-centrosomal minus-end microtubules to the Golgi, an important step for polarized cell movement. Promotes elongation of CAMSAP2-decorated microtubule stretches on the minus-end of microtubules. Acts as a regulator of autophagosome transport via interaction with CAMSAP2. Functions downstream of Rho GTPases and DIAPH1 in stable microtubule formation. May play a role in cell migration. In Bos taurus (Bovine), this protein is Microtubule-associated protein RP/EB family member 1 (MAPRE1).